The sequence spans 112 residues: Nucleoid-associated protein FTN_1196 (112 aa).

The interval 1 to 27 (MNFDMSKLMQQAQKMQEQMKKAQQERE) is disordered. Over residues 17-27 (EQMKKAQQERE) the composition is skewed to basic and acidic residues.

It belongs to the YbaB/EbfC family. Homodimer.

Its subcellular location is the cytoplasm. The protein resides in the nucleoid. In terms of biological role, binds to DNA and alters its conformation. May be involved in regulation of gene expression, nucleoid organization and DNA protection. The sequence is that of Nucleoid-associated protein FTN_1196 from Francisella tularensis subsp. novicida (strain U112).